The chain runs to 233 residues: Antiholin-like protein LrgB (233 aa).

6 helical membrane-spanning segments follow: residues Leu5–Thr25, Gly33–Leu53, Ile63–Leu83, Ile97–Ile117, Leu152–Val172, and Ile212–Leu232.

Belongs to the CidB/LrgB family. LrgB subfamily.

It localises to the cell membrane. In terms of biological role, inhibits the expression or activity of extracellular murein hydrolases by interacting, possibly with LrgA, with the holin-like proteins CidA and/or CidB. The LrgAB and CidAB proteins may affect the proton motive force of the membrane. May be involved in programmed cell death (PCD), possibly triggering PCD in response to antibiotics and environmental stresses. The polypeptide is Antiholin-like protein LrgB (Staphylococcus epidermidis (strain ATCC 12228 / FDA PCI 1200)).